Consider the following 158-residue polypeptide: Transcription elongation factor GreA (158 aa).

Positions 49–69 (SEYESAKDEQAFVEGRISQIE) form a coiled coil. The segment at 102–125 (EEPESYTIVGESESDPLSGKISNE) is disordered.

The protein belongs to the GreA/GreB family.

Its function is as follows. Necessary for efficient RNA polymerase transcription elongation past template-encoded arresting sites. The arresting sites in DNA have the property of trapping a certain fraction of elongating RNA polymerases that pass through, resulting in locked ternary complexes. Cleavage of the nascent transcript by cleavage factors such as GreA or GreB allows the resumption of elongation from the new 3'terminus. GreA releases sequences of 2 to 3 nucleotides. The sequence is that of Transcription elongation factor GreA from Limosilactobacillus fermentum (strain NBRC 3956 / LMG 18251) (Lactobacillus fermentum).